Here is a 477-residue protein sequence, read N- to C-terminus: Lactate utilization protein B (477 aa).

4Fe-4S ferredoxin-type domains follow at residues 304-334 (GTQF…GHSY) and 353-382 (YDTY…LHDL). 7 residues coordinate [4Fe-4S] cluster: C313, C316, C319, C323, C366, C369, and C373. The interval 443–463 (GPKPLQAWTNSRDFPMPDDEN) is disordered.

This sequence belongs to the LutB/YkgF family.

Its function is as follows. Is involved in L-lactate degradation and allows cells to grow with lactate as the sole carbon source. Has probably a role as an electron transporter during oxidation of L-lactate. The polypeptide is Lactate utilization protein B (Macrococcus caseolyticus (strain JCSC5402) (Macrococcoides caseolyticum)).